Reading from the N-terminus, the 226-residue chain is Putative methyltransferase RP459 (226 aa).

It belongs to the methyltransferase superfamily.

This is Putative methyltransferase RP459 from Rickettsia prowazekii (strain Madrid E).